A 241-amino-acid polypeptide reads, in one-letter code: ATP synthase subunit a (241 aa).

Helical transmembrane passes span 30 to 50, 89 to 109, 128 to 148, 193 to 213, and 214 to 234; these read GQVF…VLVG, LPFI…GALI, INTT…AGLS, LAVG…VMLL, and GLFT…FYIG.

It belongs to the ATPase A chain family. F-type ATPases have 2 components, CF(1) - the catalytic core - and CF(0) - the membrane proton channel. CF(1) has five subunits: alpha(3), beta(3), gamma(1), delta(1), epsilon(1). CF(0) has four main subunits: a, b, b' and c.

Its subcellular location is the cellular thylakoid membrane. In terms of biological role, key component of the proton channel; it plays a direct role in the translocation of protons across the membrane. The polypeptide is ATP synthase subunit a (Synechococcus sp. (strain CC9605)).